We begin with the raw amino-acid sequence, 252 residues long: Neurexophilin-3 (252 aa).

The first 22 residues, 1–22 (MQLTRCCFVFLVQGSLYLVICG), serve as a signal peptide directing secretion. Residues 23–75 (QEDGPPGSEDPEHDDHEGQPRPRVPRKRGHISPKSRPLANSTLLGLLAPPGEV) form an II region. The segment at 27–59 (PPGSEDPEHDDHEGQPRPRVPRKRGHISPKSRP) is disordered. Basic residues predominate over residues 45 to 55 (RVPRKRGHISP). Residues Asn-62, Asn-127, Asn-137, and Asn-143 are each glycosylated (N-linked (GlcNAc...) asparagine). The interval 76 to 157 (WGILGQPPNR…LVPPSKAVEF (82 aa)) is III. The tract at residues 158-166 (HQEQQIFIE) is IV (linker domain). Residues 167-252 (AKASKIFNCR…HSDTPYYPSG (86 aa)) are v (Cys-rich).

This sequence belongs to the neurexophilin family. Post-translationally, may be proteolytically processed at the boundary between the N-terminal non-conserved and the central conserved domain in neuron-like cells. In terms of tissue distribution, brain. Detected in several other tissues.

The protein resides in the secreted. In terms of biological role, may be signaling molecules that resemble neuropeptides. Ligand for alpha-neurexins. The sequence is that of Neurexophilin-3 (Nxph3) from Rattus norvegicus (Rat).